A 436-amino-acid chain; its full sequence is Gamma-glutamyl phosphate reductase (436 aa).

Belongs to the gamma-glutamyl phosphate reductase family.

It is found in the cytoplasm. The enzyme catalyses L-glutamate 5-semialdehyde + phosphate + NADP(+) = L-glutamyl 5-phosphate + NADPH + H(+). It functions in the pathway amino-acid biosynthesis; L-proline biosynthesis; L-glutamate 5-semialdehyde from L-glutamate: step 2/2. Its function is as follows. Catalyzes the NADPH-dependent reduction of L-glutamate 5-phosphate into L-glutamate 5-semialdehyde and phosphate. The product spontaneously undergoes cyclization to form 1-pyrroline-5-carboxylate. This is Gamma-glutamyl phosphate reductase from Polaromonas sp. (strain JS666 / ATCC BAA-500).